A 117-amino-acid polypeptide reads, in one-letter code: B-box domain protein 30 (117 aa).

The segment at 27–73 adopts a B box-type; atypical zinc-finger fold; it reads KAPVSCELCGENATVYCEADAAFLCRKCDRWVHSANFLARRHLRRVI. Zn(2+) contacts are provided by cysteine 32, cysteine 35, cysteine 54, and histidine 59. A PFVFL motif is present at residues 113-117; the sequence is PFVFL.

Interacts with CO (via B-box) and with TPL (via PFVFL motif). As to expression, highly expressed in shoot apical meristems and in vascular tissues of leaves. Also detected in petioles.

It is found in the nucleus. Its function is as follows. Developmental regulator acting by forming heterodimeric complexes, that sequester CO and CO-like (COL) proteins into non-functional complexes. Engages CO and the transcriptional repressor TPL in a tripartite complex. Involved in the CO-mediated long-day flowering-promotion pathway. This Arabidopsis thaliana (Mouse-ear cress) protein is B-box domain protein 30.